The primary structure comprises 346 residues: LRP2-binding protein (346 aa).

The stretch at 58–91 is one TPR repeat; sequence AMAYFLRGQLYFEEGWYEEALAQFEEIQEKDHQA. Sel1-like repeat units follow at residues 92-124, 132-167, 172-205, 206-241, 242-276, and 296-331; these read IYQL…DSSC, FAAA…DNGN, VKAQ…GNGS, LESQ…ERGN, VYAQ…EVHD, and AMAA…RLNP.

As to quaternary structure, interacts with LRP2.

The protein localises to the cytoplasm. Functionally, may act as an adapter that regulates LRP2 function. This is LRP2-binding protein (Lrp2bp) from Mus musculus (Mouse).